Consider the following 123-residue polypeptide: WAP four-disulfide core domain protein 5 (123 aa).

The N-terminal stretch at 1–24 is a signal peptide; the sequence is MRIQSLLLLGALLAVGSQPPAAFG. WAP domains lie at 27–73 and 74–121; these read KGEK…CVPR and VSVK…RDPV. 8 cysteine pairs are disulfide-bonded: C34/C62, C41/C66, C49/C61, C55/C70, C81/C109, C88/C113, C96/C108, and C102/C117.

It localises to the secreted. Its function is as follows. Putative acid-stable proteinase inhibitor. The sequence is that of WAP four-disulfide core domain protein 5 (WFDC5) from Aotus nancymaae (Ma's night monkey).